The primary structure comprises 60 residues: UPF0291 protein CTC_01690.1 (60 aa).

The protein belongs to the UPF0291 family.

Its subcellular location is the cytoplasm. This chain is UPF0291 protein CTC_01690.1, found in Clostridium tetani (strain Massachusetts / E88).